The following is a 332-amino-acid chain: Glycerol-3-phosphate dehydrogenase [NAD(P)+] (332 aa).

4 residues coordinate NADPH: Ser11, Trp12, Lys32, and Lys106. Sn-glycerol 3-phosphate is bound by residues Lys106, Gly137, and Ser139. Ala141 lines the NADPH pocket. Sn-glycerol 3-phosphate is bound by residues Lys192, Asp245, Ser255, Arg256, and Asn257. Lys192 acts as the Proton acceptor in catalysis. Arg256 lines the NADPH pocket. NADPH is bound by residues Val280 and Glu282.

The protein belongs to the NAD-dependent glycerol-3-phosphate dehydrogenase family.

It localises to the cytoplasm. It carries out the reaction sn-glycerol 3-phosphate + NAD(+) = dihydroxyacetone phosphate + NADH + H(+). The catalysed reaction is sn-glycerol 3-phosphate + NADP(+) = dihydroxyacetone phosphate + NADPH + H(+). It participates in membrane lipid metabolism; glycerophospholipid metabolism. Its function is as follows. Catalyzes the reduction of the glycolytic intermediate dihydroxyacetone phosphate (DHAP) to sn-glycerol 3-phosphate (G3P), the key precursor for phospholipid synthesis. The sequence is that of Glycerol-3-phosphate dehydrogenase [NAD(P)+] from Macrococcus caseolyticus (strain JCSC5402) (Macrococcoides caseolyticum).